The following is a 315-amino-acid chain: Ribose-phosphate pyrophosphokinase (315 aa).

ATP-binding positions include 37 to 39 (DGE) and 96 to 97 (RQ). The Mg(2+) site is built by His131 and Asp170. Residue Lys194 is part of the active site. D-ribose 5-phosphate-binding positions include Arg196, Asp220, and 224 to 228 (DTGGT).

Belongs to the ribose-phosphate pyrophosphokinase family. Class I subfamily. Homohexamer. Mg(2+) serves as cofactor.

It is found in the cytoplasm. It catalyses the reaction D-ribose 5-phosphate + ATP = 5-phospho-alpha-D-ribose 1-diphosphate + AMP + H(+). The protein operates within metabolic intermediate biosynthesis; 5-phospho-alpha-D-ribose 1-diphosphate biosynthesis; 5-phospho-alpha-D-ribose 1-diphosphate from D-ribose 5-phosphate (route I): step 1/1. In terms of biological role, involved in the biosynthesis of the central metabolite phospho-alpha-D-ribosyl-1-pyrophosphate (PRPP) via the transfer of pyrophosphoryl group from ATP to 1-hydroxyl of ribose-5-phosphate (Rib-5-P). This Shewanella oneidensis (strain ATCC 700550 / JCM 31522 / CIP 106686 / LMG 19005 / NCIMB 14063 / MR-1) protein is Ribose-phosphate pyrophosphokinase.